Here is a 229-residue protein sequence, read N- to C-terminus: Urease accessory protein UreF (229 aa).

This sequence belongs to the UreF family. In terms of assembly, ureD, UreF and UreG form a complex that acts as a GTP-hydrolysis-dependent molecular chaperone, activating the urease apoprotein by helping to assemble the nickel containing metallocenter of UreC. The UreE protein probably delivers the nickel.

The protein localises to the cytoplasm. In terms of biological role, required for maturation of urease via the functional incorporation of the urease nickel metallocenter. This chain is Urease accessory protein UreF, found in Corynebacterium efficiens (strain DSM 44549 / YS-314 / AJ 12310 / JCM 11189 / NBRC 100395).